A 401-amino-acid polypeptide reads, in one-letter code: MRQAWRWFGPEAGVPLDAVRQAGATDIVSALHEVPIGQEWTSAQIVERKNLIESTPTGRHPLTWSVVESIPVSDDIKRSGKAARHDIGAWIASMEALARNDIKVICYNFMPVVDWCRTDLDYITSTGATAMRFDQDRFAAFDLHILQRKGAEKDYSEEDRIAARAIFEAMDETEIEQLIVNIASALPGSTTEPLTIPAFREKLETYASIDAAHLRRNLVEFLEAVTPVADSLGVKLTLHPDDPPRSLFGLPRIASTEADYAAIFAAVPAQSNGMCFCTGSLGVRADNDLPAIARRFASRIHFSHLRATTREGDGRTFHEAAHLEGDVDMVGILRILLEEDRKRDAGQTIIFRSDHGHRMMDDLEKKVTPGYPVIGRMRGLAELRGIITALDACALEYDPNV.

This sequence belongs to the mannonate dehydratase family. The cofactor is Fe(2+). Requires Mn(2+) as cofactor.

The enzyme catalyses D-mannonate = 2-dehydro-3-deoxy-D-gluconate + H2O. Its pathway is carbohydrate metabolism; pentose and glucuronate interconversion. Catalyzes the dehydration of D-mannonate. This Brucella canis (strain ATCC 23365 / NCTC 10854 / RM-666) protein is Mannonate dehydratase.